The following is a 158-amino-acid chain: Lysozyme C (158 aa).

The N-terminal stretch at 1 to 18 (MRVLPLALLVGLLAVSDA) is a signal peptide. Positions 19-150 (KVLGKCEFAR…DQYMAECWSR (132 aa)) constitute a C-type lysozyme domain. 4 disulfide bridges follow: C24-C147, C46-C135, C80-C93, and C89-C107. Residues E51 and D68 contribute to the active site.

This sequence belongs to the glycosyl hydrolase 22 family. In terms of assembly, monomer. Strongly expressed in gill and gonad, and marginally detectable in hemolymph and lymphoid organ. Not expressed in kidney, hepatopancreas or tail muscle.

It localises to the secreted. It carries out the reaction Hydrolysis of (1-&gt;4)-beta-linkages between N-acetylmuramic acid and N-acetyl-D-glucosamine residues in a peptidoglycan and between N-acetyl-D-glucosamine residues in chitodextrins.. In terms of biological role, lysozymes have primarily a bacteriolytic function; those in tissues and body fluids are associated with the monocyte-macrophage system and enhance the activity of immunoagents. Has bacteriolytic activity against Gram-positive bacterium M.luteus, and Gram-negative shrimp pathogenic bacteria V.alginolyticus, V.parahaemolyticus and V.vulnificus. May play a role in host defense. The polypeptide is Lysozyme C (Penaeus merguiensis (Banana prawn)).